The primary structure comprises 156 residues: MPKGSGKVLSQNKKANHDYFIEETYETGIVLQGTEIKSIRAGRVNMKDSFAKIERGEVFLHNMHISPYEQGNRYNHDPLRTRKLLMHRKEINKLIGLTKEKGYSLVPLKLYLKNGFAKVLIGLGKGKKTYDKREDLKRKDAKREIERAFRDRQKGF.

This sequence belongs to the SmpB family.

The protein resides in the cytoplasm. In terms of biological role, required for rescue of stalled ribosomes mediated by trans-translation. Binds to transfer-messenger RNA (tmRNA), required for stable association of tmRNA with ribosomes. tmRNA and SmpB together mimic tRNA shape, replacing the anticodon stem-loop with SmpB. tmRNA is encoded by the ssrA gene; the 2 termini fold to resemble tRNA(Ala) and it encodes a 'tag peptide', a short internal open reading frame. During trans-translation Ala-aminoacylated tmRNA acts like a tRNA, entering the A-site of stalled ribosomes, displacing the stalled mRNA. The ribosome then switches to translate the ORF on the tmRNA; the nascent peptide is terminated with the 'tag peptide' encoded by the tmRNA and targeted for degradation. The ribosome is freed to recommence translation, which seems to be the essential function of trans-translation. The chain is SsrA-binding protein from Bacillus velezensis (strain DSM 23117 / BGSC 10A6 / LMG 26770 / FZB42) (Bacillus amyloliquefaciens subsp. plantarum).